We begin with the raw amino-acid sequence, 154 residues long: Interleukin-2 (154 aa).

The first 20 residues, 1–20, serve as a signal peptide directing secretion; sequence MYRMQLLSCIALSLALITNS. Threonine 23 carries an O-linked (GalNAc...) threonine glycan. A disulfide bond links cysteine 78 and cysteine 126.

This sequence belongs to the IL-2 family.

It localises to the secreted. In terms of biological role, cytokine produced by activated CD4-positive helper T-cells and to a lesser extend activated CD8-positive T-cells and natural killer (NK) cells that plays pivotal roles in the immune response and tolerance. Binds to a receptor complex composed of either the high-affinity trimeric IL-2R (IL2RA/CD25, IL2RB/CD122 and IL2RG/CD132) or the low-affinity dimeric IL-2R (IL2RB and IL2RG). Interaction with the receptor leads to oligomerization and conformation changes in the IL-2R subunits resulting in downstream signaling starting with phosphorylation of JAK1 and JAK3. In turn, JAK1 and JAK3 phosphorylate the receptor to form a docking site leading to the phosphorylation of several substrates including STAT5. This process leads to activation of several pathways including STAT, phosphoinositide-3-kinase/PI3K and mitogen-activated protein kinase/MAPK pathways. Functions as a T-cell growth factor and can increase NK-cell cytolytic activity as well. Promotes strong proliferation of activated B-cells and subsequently immunoglobulin production. Plays a pivotal role in regulating the adaptive immune system by controlling the survival and proliferation of regulatory T-cells, which are required for the maintenance of immune tolerance. Moreover, participates in the differentiation and homeostasis of effector T-cell subsets, including Th1, Th2, Th17 as well as memory CD8-positive T-cells. This is Interleukin-2 (IL2) from Papio hamadryas (Hamadryas baboon).